Reading from the N-terminus, the 110-residue chain is Putative pterin-4-alpha-carbinolamine dehydratase (110 aa).

It belongs to the pterin-4-alpha-carbinolamine dehydratase family.

It carries out the reaction (4aS,6R)-4a-hydroxy-L-erythro-5,6,7,8-tetrahydrobiopterin = (6R)-L-erythro-6,7-dihydrobiopterin + H2O. The chain is Putative pterin-4-alpha-carbinolamine dehydratase from Vibrio vulnificus (strain CMCP6).